Here is a 648-residue protein sequence, read N- to C-terminus: Macrolide export ATP-binding/permease protein MacB (648 aa).

One can recognise an ABC transporter domain in the interval 5-243; sequence LELKDIRRSY…AGGTEPVVNT (239 aa). 41–48 is a binding site for ATP; it reads GASGSGKS. 4 helical membrane-spanning segments follow: residues 273–293, 523–543, 576–596, and 600–620; these read LLTMLGIIIGIASVVSIVVVG, LFLTLVAVISLVVGGIGVMNI, AVLVCLVGGALGITLSLLIAF, and LFLPGWEIGFSPLALLLAFLC.

Belongs to the ABC transporter superfamily. Macrolide exporter (TC 3.A.1.122) family. In terms of assembly, homodimer. Part of the tripartite efflux system MacAB-TolC, which is composed of an inner membrane transporter, MacB, a periplasmic membrane fusion protein, MacA, and an outer membrane component, TolC. The complex forms a large protein conduit and can translocate molecules across both the inner and outer membranes. Interacts with MacA.

Its subcellular location is the cell inner membrane. Functionally, part of the tripartite efflux system MacAB-TolC. MacB is a non-canonical ABC transporter that contains transmembrane domains (TMD), which form a pore in the inner membrane, and an ATP-binding domain (NBD), which is responsible for energy generation. Confers resistance against macrolides. This Shigella flexneri protein is Macrolide export ATP-binding/permease protein MacB.